We begin with the raw amino-acid sequence, 330 residues long: GTPase Obg (330 aa).

An Obg domain is found at 1-159; the sequence is MNFIDEVKIC…MWIHLSLKLL (159 aa). Residues 160–327 enclose the OBG-type G domain; it reads SDVGLVGLPN…IVKLALKTIK (168 aa). Residues 166–173, 191–195, 212–215, 279–282, and 308–310 each bind GTP; these read GLPNAGKS, FTTLV, DIPG, NKCD, and STY. Residues Ser173 and Thr193 each coordinate Mg(2+).

The protein belongs to the TRAFAC class OBG-HflX-like GTPase superfamily. OBG GTPase family. In terms of assembly, monomer. Mg(2+) is required as a cofactor.

The protein resides in the cytoplasm. In terms of biological role, an essential GTPase which binds GTP, GDP and possibly (p)ppGpp with moderate affinity, with high nucleotide exchange rates and a fairly low GTP hydrolysis rate. Plays a role in control of the cell cycle, stress response, ribosome biogenesis and in those bacteria that undergo differentiation, in morphogenesis control. In Rickettsia felis (strain ATCC VR-1525 / URRWXCal2) (Rickettsia azadi), this protein is GTPase Obg.